We begin with the raw amino-acid sequence, 428 residues long: 3-phosphoshikimate 1-carboxyvinyltransferase (428 aa).

The 3-phosphoshikimate site is built by Lys-21, Ser-22, and Arg-26. Lys-21 contacts phosphoenolpyruvate. Phosphoenolpyruvate contacts are provided by Gly-94 and Arg-122. Ser-166, Ser-167, Gln-168, Ser-194, Asp-306, and Lys-333 together coordinate 3-phosphoshikimate. Gln-168 provides a ligand contact to phosphoenolpyruvate. Asp-306 acts as the Proton acceptor in catalysis. Positions 337, 379, and 405 each coordinate phosphoenolpyruvate.

It belongs to the EPSP synthase family. Monomer.

Its subcellular location is the cytoplasm. It catalyses the reaction 3-phosphoshikimate + phosphoenolpyruvate = 5-O-(1-carboxyvinyl)-3-phosphoshikimate + phosphate. The protein operates within metabolic intermediate biosynthesis; chorismate biosynthesis; chorismate from D-erythrose 4-phosphate and phosphoenolpyruvate: step 6/7. Catalyzes the transfer of the enolpyruvyl moiety of phosphoenolpyruvate (PEP) to the 5-hydroxyl of shikimate-3-phosphate (S3P) to produce enolpyruvyl shikimate-3-phosphate and inorganic phosphate. The protein is 3-phosphoshikimate 1-carboxyvinyltransferase of Clostridium acetobutylicum (strain ATCC 824 / DSM 792 / JCM 1419 / IAM 19013 / LMG 5710 / NBRC 13948 / NRRL B-527 / VKM B-1787 / 2291 / W).